A 240-amino-acid polypeptide reads, in one-letter code: Zinc finger CCCH domain-containing protein 52 (240 aa).

Disordered regions lie at residues 1–37 (MDAR…GLGS) and 81–106 (SQVS…PGSG). The C3H1-type 1 zinc finger occupies 36–64 (GSKSKPCTKFFSTSGCPFGDNCHFLHYVP). Residues 89–104 (GSGGPGGRFSGRGDPG) show a composition bias toward gly residues. The region spanning 113-177 (ASTSKISVDA…EQINVASGMV (65 aa)) is the KH domain. Residues 205–232 (NYKTKICDRYSKGNCTYGDRCHFAHGES) form a C3H1-type 2 zinc finger.

The chain is Zinc finger CCCH domain-containing protein 52 from Arabidopsis thaliana (Mouse-ear cress).